The chain runs to 308 residues: Low density lipoprotein receptor adapter protein 1 (308 aa).

At M1 the chain carries N-acetylmethionine. Residues S14, S186, and S202 each carry the phosphoserine modification. Residues 42 to 196 (LLEGMLFSLK…QEGGDVLGAR (155 aa)) form the PID domain. The Clathrin box signature appears at 212 to 216 (LLDLE). The tract at residues 249–276 (WELDDGLDEAFSRLAQSRTNPQVLDTGL) is AP-2 complex binding. Residues 257–266 (EAFSRLAQSR) carry the [DE]-X(1,2)-F-X-X-[FL]-X-X-X-R motif motif.

As to quaternary structure, interacts (via PID domain) with LDLR (via NPXY motif). Binds to soluble clathrin trimers. Interacts with AP2B1; the interaction mediates the association with the AP-2 complex. Interacts with VLDLR. Interacts with LRP2. As to expression, expressed at high levels in the kidney, liver, and placenta, with lower levels detectable in brain, heart, muscle, colon, spleen, intestine, lung, and leukocytes.

It localises to the cytoplasm. Its function is as follows. Adapter protein (clathrin-associated sorting protein (CLASP)) required for efficient endocytosis of the LDL receptor (LDLR) in polarized cells such as hepatocytes and lymphocytes, but not in non-polarized cells (fibroblasts). May be required for LDL binding and internalization but not for receptor clustering in coated pits. May facilitate the endocytosis of LDLR and LDLR-LDL complexes from coated pits by stabilizing the interaction between the receptor and the structural components of the pits. May also be involved in the internalization of other LDLR family members. Binds to phosphoinositides, which regulate clathrin bud assembly at the cell surface. Required for trafficking of LRP2 to the endocytic recycling compartment which is necessary for LRP2 proteolysis, releasing a tail fragment which translocates to the nucleus and mediates transcriptional repression. The polypeptide is Low density lipoprotein receptor adapter protein 1 (Homo sapiens (Human)).